The primary structure comprises 445 residues: MKVKVLCRNPDDYVRETTRDIQRVPRNYDPTLHPFEVPREYTRALNATKLERVFAKPFVASLDGHRDVISCITKHAKSLSTVISGACDGEVKVWNLPKRECTRTVQAHEGFVRGICSRFCGTSFFTVGDDKTIKQWNMEAPGYGVREEPINTILGKAVFTGIDHHQREGTFVTCGQTVDIWDEQRSSPVLSFSWGVDSFSSVRYNPVEPDLLASCASDRSIVLYDTRESAPLRKVIMQLRSNTLCWNPMEAYYFTCANEDYNLYTYDIRNLDVPVTVHMDHVSAVLDVDYSPTGREFVSASFDKTIRIFPKDKGHSREVYHTKRMQHVICVKWSADSKFIMSGSDEMNIRLWKANASEKLGVLSTREKTAANYNKKLIQKFQHHPQVRRIARHRHLPRDVLKQKRELKEMKEARRRKEQNVRKHSKPGSVPLLTEKEKHVVKVVE.

WD repeat units lie at residues Gly-64–Thr-104, Ala-107–Arg-146, Leu-154–Ser-191, Trp-194–Lys-234, Ile-236–Thr-276, Asp-280–Val-319, and Lys-323–Val-362. A required for nucleolar location region spans residues Lys-353 to Val-441. Positions Lys-411–Thr-434 are disordered. The segment covering Ala-413–Lys-426 has biased composition (basic residues).

It belongs to the WD repeat DCAF13/WDSOF1 family. In terms of assembly, part of the small subunit (SSU) processome, composed of more than 70 proteins and the RNA chaperone small nucleolar RNA (snoRNA) U3. Component of the DCX(DCAF13) E3 ubiquitin ligase complex, at least composed of CUL4 (CUL4A or CUL4B), DDB1, DCAF13 and RBX1.

It localises to the nucleus. It is found in the nucleolus. Its pathway is protein modification; protein ubiquitination. Functionally, part of the small subunit (SSU) processome, first precursor of the small eukaryotic ribosomal subunit. During the assembly of the SSU processome in the nucleolus, many ribosome biogenesis factors, an RNA chaperone and ribosomal proteins associate with the nascent pre-rRNA and work in concert to generate RNA folding, modifications, rearrangements and cleavage as well as targeted degradation of pre-ribosomal RNA by the RNA exosome. In terms of biological role, substrate-recognition component of a DCX (DDB1-CUL4-X-box) E3 ubiquitin-protein ligase complex. The protein is DDB1- and CUL4-associated factor 13 (dcaf13) of Danio rerio (Zebrafish).